The sequence spans 95 residues: Large ribosomal subunit protein bL25 (95 aa).

Belongs to the bacterial ribosomal protein bL25 family. Part of the 50S ribosomal subunit; part of the 5S rRNA/L5/L18/L25 subcomplex. Contacts the 5S rRNA. Binds to the 5S rRNA independently of L5 and L18.

This is one of the proteins that binds to the 5S RNA in the ribosome where it forms part of the central protuberance. The polypeptide is Large ribosomal subunit protein bL25 (Tolumonas auensis (strain DSM 9187 / NBRC 110442 / TA 4)).